The sequence spans 541 residues: Glucose-6-phosphate isomerase (541 aa).

The Proton donor role is filled by Glu347. Catalysis depends on residues His378 and Lys506.

It belongs to the GPI family.

It localises to the cytoplasm. It carries out the reaction alpha-D-glucose 6-phosphate = beta-D-fructose 6-phosphate. Its pathway is carbohydrate biosynthesis; gluconeogenesis. The protein operates within carbohydrate degradation; glycolysis; D-glyceraldehyde 3-phosphate and glycerone phosphate from D-glucose: step 2/4. Catalyzes the reversible isomerization of glucose-6-phosphate to fructose-6-phosphate. The protein is Glucose-6-phosphate isomerase of Francisella tularensis subsp. holarctica (strain OSU18).